The following is an 89-amino-acid chain: Huwentoxin-IV (89 aa).

Residues 1–24 (MVNMKASMFLALAGLVLLFVVCYA) form the signal peptide. Positions 25-52 (SESEEKEFSNELLSSVLAVDDNSKGEER) are excised as a propeptide. Glutamate 53 bears the Pyrrolidone carboxylic acid (Glu); partial mark. Cystine bridges form between cysteine 54–cysteine 69, cysteine 61–cysteine 76, and cysteine 68–cysteine 83. Isoleucine 87 carries the post-translational modification Isoleucine amide.

It belongs to the neurotoxin 10 (Hwtx-1) family. 22 (Htx-4) subfamily. In terms of processing, two forms of huwentoxin-IV exist in the venom of H.schmidti, a non-N-terminally modified (HwTx-IV) and a naturally modified peptide with pyroglutamic acid residue at position 53 (mHwTx-IV). mHwTx-IV shows no observable difference with the unmodified toxin when applied to the TTX-S sodium channel of DRG neuron (IC(50)~50 nM) or when tested on hNav1.7/SCN9A (IC(50)=30.8 nM). In addition, similarly to the unmodified toxin, mHwTx-IV has only a weak affinity for lipid membranes. However, in contrast with HwTx-IV, which dissociates at moderate and high depolarization voltages (50-200 mV), mHwTx-IV inhibition of TTX-sensitive sodium channels is not reversed by strong depolarization voltages. In terms of tissue distribution, expressed by the venom gland.

The protein localises to the secreted. Functionally, this lethal neurotoxin (without cyclization at position 53) inhibits neuronal voltage-gated sodium channel Nav1.2/SCN2A (IC(50)=10-150 nM), rNav1.3/SCN3A (IC(50)=338 nM), Nav1.6/SCN8A (IC(50)=117 nM), and hNav1.7/SCN9A (IC(50)=9.6-33 nM). It inhibits activation of sodium channel by trapping the voltage sensor of domain II (DIIS4) in the closed configuration. The toxin neither shifts the Nav1.7/SCN9A activation curve nor modifies the slope factor. It does not slow fast-inactivation of hNav1.7/SCN9A channels. In addition, it has only a weak affinity for lipid membranes. This toxin also exists with a pyroglutamate at position 53. The sole difference observed between modified (mHwTx-IV) and unmodified toxins is that moderate or high depolarization voltages (200 mV) permit the unmodified toxin to dissociate, whereas mHwTx-IV toxin does not dissociate, even at high depolarization voltages. These data indicate that mHwTx-IV strongly binds to voltage sensor of sodium channel even at extreme depolarization voltages. The protein is Huwentoxin-IV of Cyriopagopus schmidti (Chinese bird spider).